We begin with the raw amino-acid sequence, 102 residues long: MKRILVVMSICAALAFGVSAAMAADGAALYKSCVGCHGADGSKQAMGVGHAVKGQKADELFKKLKGYADGSYGGEKKAVMTNLVKRYSDEEMKAMADYMSKL.

The N-terminal stretch at 1-23 is a signal peptide; sequence MKRILVVMSICAALAFGVSAAMA. The heme c site is built by Cys-33, Cys-36, His-37, and Met-80.

Binds 1 heme c group covalently per subunit.

It localises to the periplasm. In terms of biological role, natural electron acceptor for a formate dehydrogenase. The sequence is that of Cytochrome c-553 from Nitratidesulfovibrio vulgaris (strain DSM 19637 / Miyazaki F) (Desulfovibrio vulgaris).